Here is a 247-residue protein sequence, read N- to C-terminus: 2,3-bisphosphoglycerate-dependent phosphoglycerate mutase (247 aa).

Residues Arg-8–Asn-15, Thr-21–Gly-22, Arg-60, Glu-87–Tyr-90, Lys-98, Arg-114–Arg-115, and Gly-183–Asn-184 each bind substrate. Residue His-9 is the Tele-phosphohistidine intermediate of the active site. Glu-87 (proton donor/acceptor) is an active-site residue.

This sequence belongs to the phosphoglycerate mutase family. BPG-dependent PGAM subfamily. Homodimer.

The catalysed reaction is (2R)-2-phosphoglycerate = (2R)-3-phosphoglycerate. Its pathway is carbohydrate degradation; glycolysis; pyruvate from D-glyceraldehyde 3-phosphate: step 3/5. Its function is as follows. Catalyzes the interconversion of 2-phosphoglycerate and 3-phosphoglycerate. In Delftia acidovorans (strain DSM 14801 / SPH-1), this protein is 2,3-bisphosphoglycerate-dependent phosphoglycerate mutase.